A 529-amino-acid chain; its full sequence is Snake venom 5'-nucleotidase (529 aa).

A signal peptide is located at residue glycine 1. Aspartate 12 and histidine 14 together coordinate Zn(2+). A disulfide bond links cysteine 27 and cysteine 32. Zn(2+)-binding residues include aspartate 60, asparagine 92, histidine 195, and histidine 218. N-linked (GlcNAc...) asparagine glycans are attached at residues asparagine 308 and asparagine 322. 2 cysteine pairs are disulfide-bonded: cysteine 328–cysteine 333 and cysteine 340–cysteine 362. Position 329 (arginine 329) interacts with AMP. The AMP site is built by asparagine 365, arginine 370, and phenylalanine 393. Cysteine 452 and cysteine 455 are oxidised to a cystine. AMP is bound by residues phenylalanine 476 and aspartate 482. Serine 525 is lipidated: GPI-anchor amidated serine. Residues 526–529 constitute a propeptide, removed in mature form; the sequence is AGSL.

It belongs to the 5'-nucleotidase family. Zn(2+) serves as cofactor. Post-translationally, venom 5'-nucleotidases (or a part thereof) may be released into the venom via exosome-like vesicles. They may be attached via a GPI anchor to the membrane of these vesicles. Soluble forms of 5'-nucleotidase might be released by cleavage of the ectodomain in the exosome-like vesicles or venom gland cells. In terms of tissue distribution, expressed by the venom gland.

It localises to the membrane. The catalysed reaction is a ribonucleoside 5'-phosphate + H2O = a ribonucleoside + phosphate. Its function is as follows. Hydrolyzes nucleotides into nucleosides. Snake venom 5'-nucleotidases are widely distributed among venomous snake taxa, but there is a lack of information about their biological activities. They have been shown to inhibit platelet aggregation. This effect may be due to the liberation of inhibitory AMP or adenosine by its action on ADP released upon initiation of aggregation. Venom 5'-nucleotidases are also known to synergistically act in vivo with other toxins like ADPases, phospholipases, and disintegrins to exert a more pronounced anti-coagulant effect. This Naja atra (Chinese cobra) protein is Snake venom 5'-nucleotidase.